A 370-amino-acid polypeptide reads, in one-letter code: UDP-galactose transporter homolog 1 (370 aa).

Transmembrane regions (helical) follow at residues 22–42 (ALTL…WSIL), 62–82 (IIIN…YNYV), 115–135 (CNVL…SPIG), 145–165 (LAYL…HFIF), 175–195 (YLVA…HVTT), 204–224 (TLLG…TNST), 242–262 (LMSL…IIFH), 280–300 (LIDI…IFII), 307–327 (IILI…SVIL), and 333–353 (SWEQ…EAFI).

This sequence belongs to the nucleotide-sugar transporter family. SLC35B subfamily.

It is found in the endoplasmic reticulum membrane. In terms of biological role, may be involved in specific transport of UDP-Gal from the cytosol to the Golgi lumen. Involved in the maintenance of optimal conditions for the folding of secretory pathway proteins in the endoplasmic reticulum. The polypeptide is UDP-galactose transporter homolog 1 (HUT1) (Candida albicans (strain SC5314 / ATCC MYA-2876) (Yeast)).